The chain runs to 271 residues: Type III pantothenate kinase (271 aa).

6 to 13 (DVRNTNIV) contacts ATP. 109 to 112 (GADR) contributes to the substrate binding site. Residue Asp-111 is the Proton acceptor of the active site. K(+) is bound at residue Asp-131. Position 134 (Thr-134) interacts with ATP. Thr-186 is a substrate binding site.

This sequence belongs to the type III pantothenate kinase family. In terms of assembly, homodimer. Requires NH4(+) as cofactor. The cofactor is K(+).

The protein localises to the cytoplasm. The enzyme catalyses (R)-pantothenate + ATP = (R)-4'-phosphopantothenate + ADP + H(+). It participates in cofactor biosynthesis; coenzyme A biosynthesis; CoA from (R)-pantothenate: step 1/5. Functionally, catalyzes the phosphorylation of pantothenate (Pan), the first step in CoA biosynthesis. The polypeptide is Type III pantothenate kinase (Rhodococcus erythropolis (strain PR4 / NBRC 100887)).